We begin with the raw amino-acid sequence, 292 residues long: Glycine--tRNA ligase alpha subunit (292 aa).

The protein belongs to the class-II aminoacyl-tRNA synthetase family. Tetramer of two alpha and two beta subunits.

The protein localises to the cytoplasm. It catalyses the reaction tRNA(Gly) + glycine + ATP = glycyl-tRNA(Gly) + AMP + diphosphate. The sequence is that of Glycine--tRNA ligase alpha subunit from Synechococcus sp. (strain ATCC 27144 / PCC 6301 / SAUG 1402/1) (Anacystis nidulans).